The primary structure comprises 280 residues: Thymidylate synthase (280 aa).

Arginine 21 is a dUMP binding site. Position 51 (histidine 51) interacts with (6R)-5,10-methylene-5,6,7,8-tetrahydrofolate. A dUMP-binding site is contributed by 142–143 (RR). Cysteine 162 serves as the catalytic Nucleophile. DUMP is bound by residues 182–185 (RSAD), asparagine 193, and 223–225 (HLY). Aspartate 185 lines the (6R)-5,10-methylene-5,6,7,8-tetrahydrofolate pocket. A (6R)-5,10-methylene-5,6,7,8-tetrahydrofolate-binding site is contributed by alanine 279.

This sequence belongs to the thymidylate synthase family. Bacterial-type ThyA subfamily. In terms of assembly, homodimer.

The protein localises to the cytoplasm. The enzyme catalyses dUMP + (6R)-5,10-methylene-5,6,7,8-tetrahydrofolate = 7,8-dihydrofolate + dTMP. It participates in pyrimidine metabolism; dTTP biosynthesis. Catalyzes the reductive methylation of 2'-deoxyuridine-5'-monophosphate (dUMP) to 2'-deoxythymidine-5'-monophosphate (dTMP) while utilizing 5,10-methylenetetrahydrofolate (mTHF) as the methyl donor and reductant in the reaction, yielding dihydrofolate (DHF) as a by-product. This enzymatic reaction provides an intracellular de novo source of dTMP, an essential precursor for DNA biosynthesis. In Acinetobacter baumannii (strain AB307-0294), this protein is Thymidylate synthase.